The chain runs to 312 residues: MKVTVVGAGNVGATCADVLAYREIVNEVILLDIKEGVAEGKALDIWQKAPITQYDTKTTGVTNDYSKTANSDVVVITSGLPRKPGMTRDDLISTNAGIVRAVTESVVKYSPNAIIIVVSNPLDVMTYCAHITSKLPRNKVIGMAGVLDTARYRAFLADEIGCSPKEIQGMLLGGHGDTMVPLPRYTTVGGIPVTELVEADKLNAIIERTKNGGGELVKLMGTSAWYAPGAAAAQMVEAIVKDQKKIIPVCIKLEGEYGIDDCYLGVPAVIGKNGIEKVIELKLNAEEKALMETSRKHVKEVMNVLDGLPQQA.

Residues 7 to 12 (GAGNVG) and Asp-32 contribute to the NAD(+) site. Residues Arg-82 and Arg-88 each contribute to the substrate site. NAD(+) is bound by residues Asn-95 and 118–120 (VSN). Substrate contacts are provided by Asn-120 and Arg-151. His-175 functions as the Proton acceptor in the catalytic mechanism.

The protein belongs to the LDH/MDH superfamily. MDH type 3 family.

The enzyme catalyses (S)-malate + NAD(+) = oxaloacetate + NADH + H(+). In terms of biological role, catalyzes the reversible oxidation of malate to oxaloacetate. This Cytophaga hutchinsonii (strain ATCC 33406 / DSM 1761 / CIP 103989 / NBRC 15051 / NCIMB 9469 / D465) protein is Malate dehydrogenase.